We begin with the raw amino-acid sequence, 99 residues long: Putative UPF0320 protein YDR543C (99 aa).

Residues glutamate 80 to threonine 99 are disordered.

It belongs to the UPF0320 family.

The polypeptide is Putative UPF0320 protein YDR543C (Saccharomyces cerevisiae (strain ATCC 204508 / S288c) (Baker's yeast)).